The primary structure comprises 3660 residues: Dystrophin (3660 aa).

The segment at 1-244 is actin-binding; the sequence is MSAHVLWYEE…YVTSLFQVLP (244 aa). 2 consecutive Calponin-homology (CH) domains span residues 19 to 123 and 138 to 244; these read DVQK…LHWQ and TNSE…QVLP. Spectrin repeat units follow at residues 341–449, 450–558, 561–669, 721–830, 832–936, 945–1047, 1050–1156, 1159–1265, 1268–1369, 1470–1570, 1573–1678, 1681–1782, 1879–1981, 2013–2103, 2106–2211, 2214–2321, 2472–2574, 2577–2683, 2686–2799, 2802–2904, 2906–2928, and 2931–3037; these read MDLD…NLHK, ILMD…LLQD, RKWQ…QVSQ, EIRK…WLEY, NSII…QLQT, RYKD…KLED, TKLQ…ALKG, DKTV…TLEE, ACWH…SLEQ, EQRL…ELEK, KLSR…LLME, KHME…FIPL, HQWY…TVLE, LSEV…RFDK, EKWR…RIEE, NILS…EIEI, FNKA…QLHE, KDST…ALES, LMLQ…HLEA, DQWK…LRRQ, DDVR…KIDD, and ERLQ…QLHE. Residues 3052 to 3085 enclose the WW domain; it reads TSVQGPWERAISPNKVPYYINHETQTTCWDHPKM. A ZZ-type; degenerate zinc finger spans residues 3305–3361; that stretch reads KHQAKCNICKECPIIGFRYRSLKHFNYDICQSCFFSGRVAKGHKMHYPMVEYCTPTT. Cys3310, Cys3313, Cys3334, and Cys3337 together coordinate Zn(2+). Disordered regions lie at residues 3503–3526 and 3575–3660; these read KQQH…VSPQ and PQAD…EATM. Polar residues-rich tracts occupy residues 3582 to 3601 and 3637 to 3647; these read NGTT…SSQP and QLNNSFPSSRG.

The protein localises to the cell membrane. The protein resides in the sarcolemma. It localises to the cytoplasm. It is found in the cytoskeleton. Its subcellular location is the postsynaptic cell membrane. Its function is as follows. May play a role in anchoring the cytoskeleton to the plasma membrane. The protein is Dystrophin (DMD) of Gallus gallus (Chicken).